The following is a 1319-amino-acid chain: Girdin homolog (1319 aa).

The 113-residue stretch at 6 to 118 (ENWSHPLAFW…KLLLLLLGCA (113 aa)) folds into the Calponin-homology (CH) domain. Coiled-coil stretches lie at residues 141–173 (ELAA…TDEV), 218–690 (TSEL…ADLI), and 732–1096 (KRER…KKST). The interval 166 to 222 (KMKETDEVGGGGGSIEDVDSDDMESSTTSSSNGEIAIKQQDQSFLMSRSTSPTSELR) is disordered. Over residues 204–222 (QQDQSFLMSRSTSPTSELR) the composition is skewed to polar residues. Disordered stretches follow at residues 1112–1236 (INRR…SPAH) and 1289–1308 (NVNL…LKPN). Residues 1118–1131 (TSNGGSTTEDSSVY) are compositionally biased toward polar residues.

The protein belongs to the CCDC88 family. In terms of tissue distribution, expressed in AQR and PQR gas-sensing neurons in hermaphrodites (at protein level).

It is found in the cytoplasm. The protein localises to the cytoskeleton. Its subcellular location is the cilium basal body. It localises to the microtubule organizing center. The protein resides in the centrosome. It is found in the centriole. Functionally, scaffolding protein that plays a role in ciliogenesis, cilium positioning and dendrite anchoring in sensory amphid neurons including AWB, AWA, AWC, ADL and ASI, the phasmid neurons PHA and PHB and the gas sensing neurons AQR, PQR, URX and BAG. Its role in cilium positioning may be through regulation of the localization of cell adhesion proteins such as the apical junction protein ajm-1, and the ciliary scaffolding protein Rootletin/che-10. Plays a more prominent role in regulating dendrite morphogenesis in AQR than in PQR neurons. Regulates localization of hmr-1 to the distal AQR dendrite. During embryonic elongation, required for the anchoring of URX and BAG dendrites to the presumptive nose. The polypeptide is Girdin homolog (Caenorhabditis elegans).